Here is a 346-residue protein sequence, read N- to C-terminus: NADH-ubiquinone oxidoreductase chain 2 (346 aa).

11 helical membrane passes run 3-23 (PLIL…VMAS), 25-45 (HWLM…PILM), 59-79 (YFLT…INLM), 96-116 (IIMT…FWVP), 122-142 (ISLT…MSIL), 149-169 (INLN…GWGG), 178-198 (IMAY…VYNP), 200-220 (LTML…MLFI), 237-257 (APLI…LPPL), 274-294 (SSII…YFYM), and 322-342 (ITLL…TPML).

It belongs to the complex I subunit 2 family. Core subunit of respiratory chain NADH dehydrogenase (Complex I) which is composed of 45 different subunits. Interacts with TMEM242.

Its subcellular location is the mitochondrion inner membrane. The enzyme catalyses a ubiquinone + NADH + 5 H(+)(in) = a ubiquinol + NAD(+) + 4 H(+)(out). Its function is as follows. Core subunit of the mitochondrial membrane respiratory chain NADH dehydrogenase (Complex I) which catalyzes electron transfer from NADH through the respiratory chain, using ubiquinone as an electron acceptor. Essential for the catalytic activity and assembly of complex I. This Equus asinus (Donkey) protein is NADH-ubiquinone oxidoreductase chain 2.